Here is a 317-residue protein sequence, read N- to C-terminus: Cell division protein FtsX (317 aa).

Residues Met-1–Ser-39 lie on the Cytoplasmic side of the membrane. Residues Leu-40–Leu-60 traverse the membrane as a helical segment. Residues Lys-61–His-188 are Periplasmic-facing. A helical membrane pass occupies residues Thr-189–Leu-209. Residues Arg-210–Gly-241 are Cytoplasmic-facing. A helical transmembrane segment spans residues Ile-242–Trp-262. Topologically, residues Ser-263 to Leu-280 are periplasmic. Residues Val-281–Ile-301 form a helical membrane-spanning segment. Residues Ala-302–Ser-317 are Cytoplasmic-facing.

Belongs to the ABC-4 integral membrane protein family. FtsX subfamily. Forms a membrane-associated complex with FtsE.

The protein localises to the cell inner membrane. In terms of biological role, part of the ABC transporter FtsEX involved in cellular division. Encoded in an operon consisting of genes ftsY, ftsE and ftsX. The polypeptide is Cell division protein FtsX (Aeromonas hydrophila).